We begin with the raw amino-acid sequence, 182 residues long: MAARLKEKFIKEIRPALQKELGLENTMAVPRIEKIVLNMGLGEATQNSKLLDPLVADLAAIAGQKPVTTRAKKSIAAFKVREGMPIGAMVTLRGDTMYEFLDRLISVGLPRVRDFRGVSTKSFDGRGNYTLGVRDQLIFPEIDISKVEKLKGMNITIVTTAQDDNSARALLKQFGVPFRQTA.

This sequence belongs to the universal ribosomal protein uL5 family. Part of the 50S ribosomal subunit; part of the 5S rRNA/L5/L18/L25 subcomplex. Contacts the 5S rRNA and the P site tRNA. Forms a bridge to the 30S subunit in the 70S ribosome.

This is one of the proteins that bind and probably mediate the attachment of the 5S RNA into the large ribosomal subunit, where it forms part of the central protuberance. In the 70S ribosome it contacts protein S13 of the 30S subunit (bridge B1b), connecting the 2 subunits; this bridge is implicated in subunit movement. Contacts the P site tRNA; the 5S rRNA and some of its associated proteins might help stabilize positioning of ribosome-bound tRNAs. The protein is Large ribosomal subunit protein uL5 of Acidobacterium capsulatum (strain ATCC 51196 / DSM 11244 / BCRC 80197 / JCM 7670 / NBRC 15755 / NCIMB 13165 / 161).